A 311-amino-acid polypeptide reads, in one-letter code: Methionyl-tRNA formyltransferase (311 aa).

(6S)-5,6,7,8-tetrahydrofolate is bound at residue 112-115; it reads SLLP.

This sequence belongs to the Fmt family.

It catalyses the reaction L-methionyl-tRNA(fMet) + (6R)-10-formyltetrahydrofolate = N-formyl-L-methionyl-tRNA(fMet) + (6S)-5,6,7,8-tetrahydrofolate + H(+). Functionally, attaches a formyl group to the free amino group of methionyl-tRNA(fMet). The formyl group appears to play a dual role in the initiator identity of N-formylmethionyl-tRNA by promoting its recognition by IF2 and preventing the misappropriation of this tRNA by the elongation apparatus. The protein is Methionyl-tRNA formyltransferase of Bartonella henselae (strain ATCC 49882 / DSM 28221 / CCUG 30454 / Houston 1) (Rochalimaea henselae).